The following is a 155-amino-acid chain: Ribosome maturation factor RimP (155 aa).

The protein belongs to the RimP family.

Its subcellular location is the cytoplasm. Functionally, required for maturation of 30S ribosomal subunits. The sequence is that of Ribosome maturation factor RimP from Agathobacter rectalis (strain ATCC 33656 / DSM 3377 / JCM 17463 / KCTC 5835 / VPI 0990) (Eubacterium rectale).